Here is a 515-residue protein sequence, read N- to C-terminus: 2-isopropylmalate synthase (515 aa).

The Pyruvate carboxyltransferase domain occupies 4–266 (IKFFDTTLRD…ETRLNLQEIK (263 aa)). 4 residues coordinate Mn(2+): aspartate 13, histidine 201, histidine 203, and asparagine 237. The regulatory domain stretch occupies residues 391-515 (QLSSIQVQYG…RGENEKVATP (125 aa)).

It belongs to the alpha-IPM synthase/homocitrate synthase family. LeuA type 1 subfamily. As to quaternary structure, homodimer. Mn(2+) serves as cofactor.

The protein localises to the cytoplasm. It carries out the reaction 3-methyl-2-oxobutanoate + acetyl-CoA + H2O = (2S)-2-isopropylmalate + CoA + H(+). It functions in the pathway amino-acid biosynthesis; L-leucine biosynthesis; L-leucine from 3-methyl-2-oxobutanoate: step 1/4. Functionally, catalyzes the condensation of the acetyl group of acetyl-CoA with 3-methyl-2-oxobutanoate (2-ketoisovalerate) to form 3-carboxy-3-hydroxy-4-methylpentanoate (2-isopropylmalate). The protein is 2-isopropylmalate synthase of Geobacillus kaustophilus (strain HTA426).